The chain runs to 313 residues: N-acetyl-gamma-glutamyl-phosphate reductase (313 aa).

Cys-117 is a catalytic residue.

It belongs to the NAGSA dehydrogenase family. Type 2 subfamily.

The protein localises to the cytoplasm. It carries out the reaction N-acetyl-L-glutamate 5-semialdehyde + phosphate + NADP(+) = N-acetyl-L-glutamyl 5-phosphate + NADPH + H(+). Its pathway is amino-acid biosynthesis; L-arginine biosynthesis; N(2)-acetyl-L-ornithine from L-glutamate: step 3/4. Catalyzes the NADPH-dependent reduction of N-acetyl-5-glutamyl phosphate to yield N-acetyl-L-glutamate 5-semialdehyde. The protein is N-acetyl-gamma-glutamyl-phosphate reductase of Burkholderia cenocepacia (strain HI2424).